A 249-amino-acid polypeptide reads, in one-letter code: Ubiquinone biosynthesis protein COQ4 homolog, mitochondrial (249 aa).

Residues His134, Asp135, His138, and Glu150 each contribute to the Zn(2+) site.

Belongs to the COQ4 family. In terms of assembly, component of a multi-subunit COQ enzyme complex. Zn(2+) is required as a cofactor.

It is found in the mitochondrion inner membrane. The enzyme catalyses a 4-hydroxy-3-methoxy-5-(all-trans-polyprenyl)benzoate + H(+) = a 2-methoxy-6-(all-trans-polyprenyl)phenol + CO2. The protein operates within cofactor biosynthesis; ubiquinone biosynthesis. In terms of biological role, lyase that catalyzes the C1-decarboxylation of 4-hydroxy-3-methoxy-5-(all-trans-polyprenyl)benzoic acid into 2-methoxy-6-(all-trans-polyprenyl)phenol during ubiquinone biosynthesis. The polypeptide is Ubiquinone biosynthesis protein COQ4 homolog, mitochondrial (Trypanosoma brucei brucei (strain 927/4 GUTat10.1)).